The following is a 354-amino-acid chain: UDP-N-acetylglucosamine--N-acetylmuramyl-(pentapeptide) pyrophosphoryl-undecaprenol N-acetylglucosamine transferase (354 aa).

UDP-N-acetyl-alpha-D-glucosamine contacts are provided by residues 15–17 (TGG), asparagine 127, arginine 163, serine 191, isoleucine 244, 263–268 (ALTVSE), and glutamine 288.

Belongs to the glycosyltransferase 28 family. MurG subfamily.

Its subcellular location is the cell inner membrane. The catalysed reaction is di-trans,octa-cis-undecaprenyl diphospho-N-acetyl-alpha-D-muramoyl-L-alanyl-D-glutamyl-meso-2,6-diaminopimeloyl-D-alanyl-D-alanine + UDP-N-acetyl-alpha-D-glucosamine = di-trans,octa-cis-undecaprenyl diphospho-[N-acetyl-alpha-D-glucosaminyl-(1-&gt;4)]-N-acetyl-alpha-D-muramoyl-L-alanyl-D-glutamyl-meso-2,6-diaminopimeloyl-D-alanyl-D-alanine + UDP + H(+). Its pathway is cell wall biogenesis; peptidoglycan biosynthesis. Cell wall formation. Catalyzes the transfer of a GlcNAc subunit on undecaprenyl-pyrophosphoryl-MurNAc-pentapeptide (lipid intermediate I) to form undecaprenyl-pyrophosphoryl-MurNAc-(pentapeptide)GlcNAc (lipid intermediate II). This Vibrio cholerae serotype O1 (strain ATCC 39541 / Classical Ogawa 395 / O395) protein is UDP-N-acetylglucosamine--N-acetylmuramyl-(pentapeptide) pyrophosphoryl-undecaprenol N-acetylglucosamine transferase.